The primary structure comprises 293 residues: 5'-3' exoribonuclease Rnm (293 aa).

Residues histidine 17, histidine 19, aspartate 24, histidine 49, glutamate 76, histidine 87, histidine 202, aspartate 259, and histidine 261 each coordinate Mn(2+).

This sequence belongs to the PHP family. TrpH/YciV subfamily. Mn(2+) serves as cofactor.

It carries out the reaction a ribonucleoside 3',5'-bisphosphate + H2O = a ribonucleoside 5'-phosphate + phosphate. In terms of biological role, exoribonuclease that catalyzes the last steps of 5S, 16S and 23S rRNA 5'-end maturation. Removes 3 nucleotides (nt) from the 5' end of 5S, 16S and 23S rRNA precursors to generate the mature 5' ends. 5S and 23S rRNA maturation occurs more efficiently and accurately on ribosomal particles as compared to free RNA. Efficiently catalyzes the hydrolysis of the 3'-phosphate from 3',5'-bis-phosphonucleotides as well as the successive hydrolysis of 5'-phosphomononucleotides from the 5'-end of short pieces of RNA and DNA, with no specificity toward the identity of the nucleotide base. Is more efficient at hydrolyzing RNA oligonucleotides than DNA oligonucleotides. This enzyme can also hydrolyze annealed DNA duplexes, albeit at a catalytic efficiency lower than that of the corresponding single-stranded oligonucleotides. This Salmonella typhimurium (strain LT2 / SGSC1412 / ATCC 700720) protein is 5'-3' exoribonuclease Rnm.